The chain runs to 691 residues: Protein-glutamine gamma-glutamyltransferase E (691 aa).

At Tyr-110 the chain carries Phosphotyrosine. Position 111 is a phosphothreonine (Thr-111). The Ca(2+) site is built by Ala-221, Asn-224, Asn-226, and Asp-227. Residue Cys-272 is part of the active site. Asp-301, Asp-303, Asn-305, Ser-307, and Asp-324 together coordinate Ca(2+). Catalysis depends on residues His-330 and Asp-353. 4 residues coordinate Ca(2+): Asn-393, Thr-414, Glu-442, and Glu-447.

This sequence belongs to the transglutaminase superfamily. Transglutaminase family. As to quaternary structure, consists of two polypeptide chains, which are synthesized as a precursor form of a single polypeptide. Requires Ca(2+) as cofactor. Post-translationally, activated by proteolytic processing. In vitro activation is commonly achieved by cleavage with dispase, a neutral bacterial protease. Physiological activation may be catalyzed by CTSL and, to a lesser extent, by CTSS.

It localises to the cytoplasm. The catalysed reaction is L-glutaminyl-[protein] + L-lysyl-[protein] = [protein]-L-lysyl-N(6)-5-L-glutamyl-[protein] + NH4(+). Its function is as follows. Catalyzes the calcium-dependent formation of isopeptide cross-links between glutamine and lysine residues in various proteins, as well as the conjugation of polyamines to proteins. Involved in the formation of the cornified envelope (CE), a specialized component consisting of covalent cross-links of proteins beneath the plasma membrane of terminally differentiated keratinocytes. Catalyzes small proline-rich proteins and LOR cross-linking to form small interchain oligomers, which are further cross-linked by TGM1 onto the growing CE scaffold. In hair follicles, involved in cross-linking structural proteins to hardening the inner root sheath. This is Protein-glutamine gamma-glutamyltransferase E (TGM3) from Bos taurus (Bovine).